The following is a 301-amino-acid chain: tRNA dimethylallyltransferase (301 aa).

8-15 contacts ATP; sequence GATGTGKS. 10–15 is a substrate binding site; it reads TGTGKS. Residues 33–36 are interaction with substrate tRNA; sequence DSMQ.

Belongs to the IPP transferase family. Monomer. Mg(2+) serves as cofactor.

The enzyme catalyses adenosine(37) in tRNA + dimethylallyl diphosphate = N(6)-dimethylallyladenosine(37) in tRNA + diphosphate. Catalyzes the transfer of a dimethylallyl group onto the adenine at position 37 in tRNAs that read codons beginning with uridine, leading to the formation of N6-(dimethylallyl)adenosine (i(6)A). The polypeptide is tRNA dimethylallyltransferase (Tropheryma whipplei (strain Twist) (Whipple's bacillus)).